The sequence spans 410 residues: D-amino acid dehydrogenase (410 aa).

Glycine 9 to glycine 14 provides a ligand contact to FAD.

Belongs to the DadA oxidoreductase family. FAD is required as a cofactor.

It localises to the cell inner membrane. It carries out the reaction a D-alpha-amino acid + a quinone + H2O = a 2-oxocarboxylate + a quinol + NH4(+). Functionally, catalyzes the oxidative deamination of D-amino acids. Has broad substrate specificity; is mostly active on D-proline, and to a lesser extent, on several other D-amino acids such as D-alanine, D-phenylalanine and D-serine. Mediates electron transport from D-proline to coenzyme Q1 in vitro, and is involved in the electron transport chain from D-proline to the c-type cytochrome in vivo. This chain is D-amino acid dehydrogenase, found in Helicobacter pylori (strain J99 / ATCC 700824) (Campylobacter pylori J99).